The following is a 423-amino-acid chain: Lipid droplet-regulating VLDL assembly factor AUP1 (423 aa).

At 1–19 the chain is on the cytoplasmic side; that stretch reads METRGIEQMFDFQRLPNDR. The stretch at 20-40 is an intramembrane region; that stretch reads FILLLLLLYAPVGFCLMLLRI. At 41-423 the chain is on the cytoplasmic side; that stretch reads FIGVHVFLVS…KHGLNKEDDL (383 aa). A CUE domain is found at 304–346; it reads RIARLAQQVKEVLPDVPVSVITRDLLQTNCVDTTITNLLERTD. The interval 355-392 is disordered; that stretch reads TMPSGPGKAAASSTPSAMVSSPNLKPAAKSFGRSPIDR. Residues 365 to 377 are compositionally biased toward polar residues; that stretch reads ASSTPSAMVSSPN.

This sequence belongs to the AUP1 family.

The protein localises to the endoplasmic reticulum membrane. It is found in the lipid droplet. Its function is as follows. Plays a role in the translocation of terminally misfolded proteins from the endoplasmic reticulum lumen to the cytoplasm and their degradation by the proteasome. Plays a role in lipid droplet formation. Induces lipid droplet clustering. The polypeptide is Lipid droplet-regulating VLDL assembly factor AUP1 (Danio rerio (Zebrafish)).